The sequence spans 496 residues: Serine/threonine-protein kinase Sgk3 (496 aa).

The PX domain maps to 12 to 124; sequence SCPSVSIPSS…AFLQMDSPRH (113 aa). Residues 121-157 form a disordered region; sequence SPRHQSDPSEDEDERSTSKPHSTSRNINLGPTGNPHA. Phosphoserine occurs at positions 126 and 129. Polar residues predominate over residues 139 to 151; that stretch reads KPHSTSRNINLGP. Residues 162–419 form the Protein kinase domain; the sequence is FDFLKVIGKG…FLEIQNHPFF (258 aa). Residues 168 to 176 and Lys-191 each bind ATP; that span reads IGKGSFGKV. The Nuclear localization signal motif lies at 195–205; sequence KKIVLNRKEQK. Residue Asp-286 is the Proton acceptor of the active site. Position 320 is a phosphothreonine; by PDPK1 (Thr-320). In terms of domain architecture, AGC-kinase C-terminal spans 420–496; the sequence is ESLSWTDLVQ…YAPPSEDLFL (77 aa). Residue Ser-486 is modified to Phosphoserine.

This sequence belongs to the protein kinase superfamily. AGC Ser/Thr protein kinase family. In terms of assembly, interacts with GSK3B and FLII. Interacts with PDPK1 in a phosphorylation-dependent manner. Activated by phosphorylation on Ser-486 by an unknown kinase (may be mTORC2 but not confirmed), transforming it into a substrate for PDPK1 which then phosphorylates it on Thr-320. In terms of tissue distribution, widely expressed, predominantly in the heart, spleen and 7-day embryo.

Its subcellular location is the cytoplasmic vesicle. The protein resides in the early endosome. It is found in the recycling endosome. The enzyme catalyses L-seryl-[protein] + ATP = O-phospho-L-seryl-[protein] + ADP + H(+). The catalysed reaction is L-threonyl-[protein] + ATP = O-phospho-L-threonyl-[protein] + ADP + H(+). Its activity is regulated as follows. Two specific sites, one in the kinase domain (Thr-320) and the other in the C-terminal regulatory region (Ser-486), need to be phosphorylated for its full activation. Functionally, serine/threonine-protein kinase which is involved in the regulation of a wide variety of ion channels, membrane transporters, cell growth, proliferation, survival and migration. Up-regulates Na(+) channels: SCNN1A/ENAC and SCN5A, K(+) channels: KCNA3/KV1.3, KCNE1, KCNQ1 and KCNH2/HERG, epithelial Ca(2+) channels: TRPV5 and TRPV6, chloride channel: BSND, creatine transporter: SLC6A8, Na(+)/dicarboxylate cotransporter: SLC13A2/NADC1, Na(+)-dependent phosphate cotransporter: SLC34A2/NAPI-2B, amino acid transporters: SLC1A5/ASCT2 and SLC6A19, glutamate transporters: SLC1A3/EAAT1, SLC1A6/EAAT4 and SLC1A7/EAAT5, glutamate receptors: GRIA1/GLUR1 and GRIK2/GLUR6, Na(+)/H(+) exchanger: SLC9A3/NHE3, and the Na(+)/K(+) ATPase. Plays a role in the regulation of renal tubular phosphate transport and bone density. Phosphorylates NEDD4L and GSK3B. Positively regulates ER transcription activity through phosphorylation of FLII. Negatively regulates the function of ITCH/AIP4 via its phosphorylation and thereby prevents CXCR4 from being efficiently sorted to lysosomes. This chain is Serine/threonine-protein kinase Sgk3 (Sgk3), found in Mus musculus (Mouse).